The following is a 178-amino-acid chain: uncharacterized protein (178 aa).

This sequence belongs to the tail fiber family.

This is an uncharacterized protein from Escherichia coli (strain K12).